Reading from the N-terminus, the 143-residue chain is MAVERTLSIIKPDAVAKNVIGEIVTRFEKAGLSVVAMKMVHLSDEKAGGFYAEHKERPFFKDLVGFMTSGPVVVQVLEGEDAVAKNRDLMGATNPKEAEAGTIRADFAETIDANAVHGSDSTESAAREVAYFFSDEEVCPRAS.

Residues lysine 11, phenylalanine 59, arginine 87, threonine 93, arginine 104, and asparagine 114 each coordinate ATP. The active-site Pros-phosphohistidine intermediate is the histidine 117.

It belongs to the NDK family. Homotetramer. It depends on Mg(2+) as a cofactor.

It is found in the cytoplasm. The enzyme catalyses a 2'-deoxyribonucleoside 5'-diphosphate + ATP = a 2'-deoxyribonucleoside 5'-triphosphate + ADP. It carries out the reaction a ribonucleoside 5'-diphosphate + ATP = a ribonucleoside 5'-triphosphate + ADP. In terms of biological role, major role in the synthesis of nucleoside triphosphates other than ATP. The ATP gamma phosphate is transferred to the NDP beta phosphate via a ping-pong mechanism, using a phosphorylated active-site intermediate. The chain is Nucleoside diphosphate kinase from Alcanivorax borkumensis (strain ATCC 700651 / DSM 11573 / NCIMB 13689 / SK2).